The sequence spans 235 residues: MKLWDILATCLLLLSSVSTRPLFHKLQPSKRAVVRSESPALDPIIDSQPETSNPKQASMEEQYDLTGLYPEQFEDVMDFIEATLGRLRRSSDVEPQMKRDRVRQKAAANTEKSGGRGRGERKRSRGRARSRDDRVKGQGRGCLLKEIHLNVTDLDLGYRTKEELIFRYCSGPCHDAETNYDKILNNLTHNKKLDKDTPSRTCCRPIAFDDDISFLDDSLEYHTLKKHSAKKCACV.

An N-terminal signal peptide occupies residues 1–19 (MKLWDILATCLLLLSSVST). Positions 20–87 (RPLFHKLQPS…DFIEATLGRL (68 aa)) are excised as a propeptide. Disordered regions lie at residues 34–60 (VRSE…ASME) and 91–137 (SDVE…RVKG). Basic residues predominate over residues 119 to 128 (GERKRSRGRA). 3 disulfides stabilise this stretch: C142-C203, C169-C232, and C173-C234. 2 N-linked (GlcNAc...) asparagine glycosylation sites follow: N150 and N186.

The protein belongs to the TGF-beta family. GDNF subfamily. In terms of assembly, homodimer; disulfide-linked. Interacts with GFRA1 coreceptor and RET: forms a 2:2:2 ternary complex composed of GDNF ligand, GFRA1 and RET receptor. As to expression, first expressed at 14 hours post-fertilization (hpf) in the ventral half of anterior somites and in intermediate mesoderm. Ventral somitic expression persists and extends more posteriorly over the next 12 hours. Expressed throughout the ventral trunk mesoderm and endoderm at 24 hpf. By 30 hpf, somitic expression ceases and by 36 hpf, expression becomes restricted to the endodermal cells forming the gut, with expression along the whole length of the developing gut tube at 72 hpf.

The protein resides in the secreted. Neurotrophic factor that enhances survival and morphological differentiation of dopaminergic neurons and increases their high-affinity dopamine uptake. Acts by binding to its coreceptor, GFRA1, leading to autophosphorylation and activation of the RET receptor. In Danio rerio (Zebrafish), this protein is Glial cell line-derived neurotrophic factor.